We begin with the raw amino-acid sequence, 218 residues long: Cytochrome b6 (218 aa).

A helical transmembrane segment spans residues 35–55 (IFYCLGGITLVCFLIQFATGF). C38 lines the heme c pocket. Residues H89 and H103 each coordinate heme b. Helical transmembrane passes span 93-113 (ASMM…TGGF), 119-139 (LTWV…VTGY), and 189-209 (LHTF…FLMI). Residues H190 and H205 each contribute to the heme b site.

Belongs to the cytochrome b family. PetB subfamily. The 4 large subunits of the cytochrome b6-f complex are cytochrome b6, subunit IV (17 kDa polypeptide, PetD), cytochrome f and the Rieske protein, while the 4 small subunits are PetG, PetL, PetM and PetN. The complex functions as a dimer. Requires heme b as cofactor. Heme c is required as a cofactor.

It localises to the cellular thylakoid membrane. Its function is as follows. Component of the cytochrome b6-f complex, which mediates electron transfer between photosystem II (PSII) and photosystem I (PSI), cyclic electron flow around PSI, and state transitions. This is Cytochrome b6 from Prochlorococcus marinus (strain MIT 9215).